A 217-amino-acid chain; its full sequence is Pyridoxine/pyridoxamine 5'-phosphate oxidase (217 aa).

Substrate is bound by residues R13–Y16 and K71. Residues R66–K71, Y81–T82, R87, K88, and Q110 each bind FMN. 3 residues coordinate substrate: Y128, R132, and S136. FMN is bound by residues Q145–S146 and W190. R196–H198 provides a ligand contact to substrate. Position 200 (R200) interacts with FMN.

It belongs to the pyridoxamine 5'-phosphate oxidase family. Homodimer. Requires FMN as cofactor.

It carries out the reaction pyridoxamine 5'-phosphate + O2 + H2O = pyridoxal 5'-phosphate + H2O2 + NH4(+). It catalyses the reaction pyridoxine 5'-phosphate + O2 = pyridoxal 5'-phosphate + H2O2. It participates in cofactor metabolism; pyridoxal 5'-phosphate salvage; pyridoxal 5'-phosphate from pyridoxamine 5'-phosphate: step 1/1. Its pathway is cofactor metabolism; pyridoxal 5'-phosphate salvage; pyridoxal 5'-phosphate from pyridoxine 5'-phosphate: step 1/1. Functionally, catalyzes the oxidation of either pyridoxine 5'-phosphate (PNP) or pyridoxamine 5'-phosphate (PMP) into pyridoxal 5'-phosphate (PLP). The sequence is that of Pyridoxine/pyridoxamine 5'-phosphate oxidase from Yersinia enterocolitica serotype O:8 / biotype 1B (strain NCTC 13174 / 8081).